We begin with the raw amino-acid sequence, 108 residues long: MPGHEITQQLDVVYGSTVRSKHVGRDLLAGLKNIVGGELTAYTELLEESRQEAMQRMIAKAQQLGANAIVGIRFSTSNIAQGASELFVYGTAVIVQPNAPKLPDPFNP.

Belongs to the UPF0145 family.

This chain is UPF0145 protein ACIAD2946, found in Acinetobacter baylyi (strain ATCC 33305 / BD413 / ADP1).